Consider the following 154-residue polypeptide: 6,7-dimethyl-8-ribityllumazine synthase (154 aa).

5-amino-6-(D-ribitylamino)uracil contacts are provided by residues Phe-26, 60–62 (ALE), and 84–86 (CII). 89–90 (ET) provides a ligand contact to (2S)-2-hydroxy-3-oxobutyl phosphate. His-92 acts as the Proton donor in catalysis. Position 117 (Asn-117) interacts with 5-amino-6-(D-ribitylamino)uracil. Residue Arg-131 participates in (2S)-2-hydroxy-3-oxobutyl phosphate binding.

It belongs to the DMRL synthase family.

The catalysed reaction is (2S)-2-hydroxy-3-oxobutyl phosphate + 5-amino-6-(D-ribitylamino)uracil = 6,7-dimethyl-8-(1-D-ribityl)lumazine + phosphate + 2 H2O + H(+). Its pathway is cofactor biosynthesis; riboflavin biosynthesis; riboflavin from 2-hydroxy-3-oxobutyl phosphate and 5-amino-6-(D-ribitylamino)uracil: step 1/2. In terms of biological role, catalyzes the formation of 6,7-dimethyl-8-ribityllumazine by condensation of 5-amino-6-(D-ribitylamino)uracil with 3,4-dihydroxy-2-butanone 4-phosphate. This is the penultimate step in the biosynthesis of riboflavin. The sequence is that of 6,7-dimethyl-8-ribityllumazine synthase from Acidovorax ebreus (strain TPSY) (Diaphorobacter sp. (strain TPSY)).